The primary structure comprises 308 residues: Acetyl-coenzyme A carboxylase carboxyl transferase subunit beta 1 (308 aa).

In terms of domain architecture, CoA carboxyltransferase N-terminal spans 25 to 294; the sequence is VWTKCTSCEQ…PLVVSVNESP (270 aa). Zn(2+) contacts are provided by cysteine 29, cysteine 32, cysteine 48, and cysteine 51. A C4-type zinc finger spans residues 29–51; the sequence is CTSCEQVLYHAELERNLEVCPKC. Positions 288 to 308 are disordered; the sequence is VSVNESPNEEPYSVPEVDEKG.

The protein belongs to the AccD/PCCB family. As to quaternary structure, acetyl-CoA carboxylase is a heterohexamer composed of biotin carboxyl carrier protein (AccB), biotin carboxylase (AccC) and two subunits each of ACCase subunit alpha (AccA) and ACCase subunit beta (AccD). Zn(2+) is required as a cofactor.

The protein resides in the cytoplasm. It carries out the reaction N(6)-carboxybiotinyl-L-lysyl-[protein] + acetyl-CoA = N(6)-biotinyl-L-lysyl-[protein] + malonyl-CoA. Its pathway is lipid metabolism; malonyl-CoA biosynthesis; malonyl-CoA from acetyl-CoA: step 1/1. Component of the acetyl coenzyme A carboxylase (ACC) complex. Biotin carboxylase (BC) catalyzes the carboxylation of biotin on its carrier protein (BCCP) and then the CO(2) group is transferred by the transcarboxylase to acetyl-CoA to form malonyl-CoA. This is Acetyl-coenzyme A carboxylase carboxyl transferase subunit beta 1 from Vibrio parahaemolyticus serotype O3:K6 (strain RIMD 2210633).